Reading from the N-terminus, the 77-residue chain is Small VCP/p97-interacting protein (77 aa).

Disordered stretches follow at residues 1 to 20 (MGLC…DLEE) and 25 to 77 (LAEA…WTVS). Residue glycine 2 is the site of N-myristoyl glycine attachment. S-palmitoyl cysteine attachment occurs at residues cysteine 4 and cysteine 7. The VCP/p97-interacting motif (VIM) stretch occupies residues 21-33 (KRAKLAEAAERRQ). Residues 25 to 37 (LAEAAERRQKEAA) are compositionally biased toward basic and acidic residues. Serine 46 is subject to Phosphoserine.

This sequence belongs to the SVIP family. As to quaternary structure, interacts (via VIM motif) with VCP/p97. Forms a complex with VCP/p97 and DERL1.

It localises to the membrane. The protein localises to the smooth endoplasmic reticulum membrane. It is found in the golgi apparatus membrane. The protein resides in the cell membrane. Its subcellular location is the lysosome membrane. In terms of biological role, negative regulator of the ER-associated degradation pathway (ERAD) of misfolded proteins. It competes with AMFR/gp78 for binding VCP/p97, and inhibits AMFR/gp78-VCP/p97 complex formation that is required for degradation of ERAD substrates. Involved in the regulation of adrenal cortisol and dehydroepiandrosterone (DHEA) biosynthesis. The chain is Small VCP/p97-interacting protein (SVIP) from Homo sapiens (Human).